The primary structure comprises 406 residues: Peptidase T (406 aa).

His82 is a binding site for Zn(2+). Asp84 is a catalytic residue. Asp142 is a binding site for Zn(2+). Catalysis depends on Glu176, which acts as the Proton acceptor. 3 residues coordinate Zn(2+): Glu177, Asp199, and His381.

Belongs to the peptidase M20B family. It depends on Zn(2+) as a cofactor.

The protein resides in the cytoplasm. It catalyses the reaction Release of the N-terminal residue from a tripeptide.. Cleaves the N-terminal amino acid of tripeptides. The sequence is that of Peptidase T from Streptococcus agalactiae serotype Ia (strain ATCC 27591 / A909 / CDC SS700).